Consider the following 509-residue polypeptide: Putative aldehyde dehydrogenase family 7 member A1 homolog (509 aa).

Residue 244–249 (GSTEVG) coordinates NAD(+). E266 acts as the Proton acceptor in catalysis. Residue C300 is the Nucleophile of the active site.

The protein belongs to the aldehyde dehydrogenase family. Homotetramer.

The catalysed reaction is an aldehyde + NAD(+) + H2O = a carboxylate + NADH + 2 H(+). This Dictyostelium discoideum (Social amoeba) protein is Putative aldehyde dehydrogenase family 7 member A1 homolog.